We begin with the raw amino-acid sequence, 468 residues long: ATP synthase subunit beta (468 aa).

ATP is bound at residue 155–162; that stretch reads GGAGVGKT.

This sequence belongs to the ATPase alpha/beta chains family. F-type ATPases have 2 components, CF(1) - the catalytic core - and CF(0) - the membrane proton channel. CF(1) has five subunits: alpha(3), beta(3), gamma(1), delta(1), epsilon(1). CF(0) has three main subunits: a(1), b(2) and c(9-12). The alpha and beta chains form an alternating ring which encloses part of the gamma chain. CF(1) is attached to CF(0) by a central stalk formed by the gamma and epsilon chains, while a peripheral stalk is formed by the delta and b chains.

Its subcellular location is the cell membrane. The catalysed reaction is ATP + H2O + 4 H(+)(in) = ADP + phosphate + 5 H(+)(out). Its function is as follows. Produces ATP from ADP in the presence of a proton gradient across the membrane. The catalytic sites are hosted primarily by the beta subunits. The protein is ATP synthase subunit beta of Streptococcus uberis (strain ATCC BAA-854 / 0140J).